The chain runs to 437 residues: 3-phosphoshikimate 1-carboxyvinyltransferase (437 aa).

3 residues coordinate 3-phosphoshikimate: K22, S23, and R27. K22 is a phosphoenolpyruvate binding site. 2 residues coordinate phosphoenolpyruvate: G94 and R122. The 3-phosphoshikimate site is built by S167, Q169, D314, and K341. Q169 is a phosphoenolpyruvate binding site. D314 serves as the catalytic Proton acceptor. The phosphoenolpyruvate site is built by R345 and R389.

This sequence belongs to the EPSP synthase family. As to quaternary structure, monomer.

It localises to the cytoplasm. The enzyme catalyses 3-phosphoshikimate + phosphoenolpyruvate = 5-O-(1-carboxyvinyl)-3-phosphoshikimate + phosphate. The protein operates within metabolic intermediate biosynthesis; chorismate biosynthesis; chorismate from D-erythrose 4-phosphate and phosphoenolpyruvate: step 6/7. In terms of biological role, catalyzes the transfer of the enolpyruvyl moiety of phosphoenolpyruvate (PEP) to the 5-hydroxyl of shikimate-3-phosphate (S3P) to produce enolpyruvyl shikimate-3-phosphate and inorganic phosphate. This chain is 3-phosphoshikimate 1-carboxyvinyltransferase, found in Oenococcus oeni (strain ATCC BAA-331 / PSU-1).